A 387-amino-acid polypeptide reads, in one-letter code: Proline-rich protein 5 (387 aa).

Interaction with RICTOR stretches follow at residues M10 to G96 and H189 to Y219. A disordered region spans residues S11 to T33. The span at L18–T33 shows a compositional bias: basic and acidic residues. S253 is modified (phosphoserine). Disordered regions lie at residues N262–L347 and D365–V387. A compositionally biased stretch (low complexity) spans S310–S321. Phosphoserine is present on S373.

The protein belongs to the PROTOR family. In terms of assembly, associated component of the mechanistic target of rapamycin complex 2 (mTORC2). Binds directly to MTOR and RICTOR within the TORC2 complex.

Associated subunit of mTORC2, which regulates cell growth and survival in response to hormonal signals. mTORC2 is activated by growth factors, but, in contrast to mTORC1, seems to be nutrient-insensitive. mTORC2 seems to function upstream of Rho GTPases to regulate the actin cytoskeleton, probably by activating one or more Rho-type guanine nucleotide exchange factors. PRR5 plays an important role in regulation of PDGFRB expression and in modulation of platelet-derived growth factor signaling. May act as a tumor suppressor in breast cancer. The chain is Proline-rich protein 5 from Rattus norvegicus (Rat).